Here is a 253-residue protein sequence, read N- to C-terminus: Trypsin beta (253 aa).

The N-terminal stretch at 1-22 (MLKFVILLSAVACALGGTIPEG) is a signal peptide. The propeptide at 23–30 (LLPQLDGR) is activation peptide. Positions 31–253 (IVGGTATTIS…DLRSWVINNA (223 aa)) constitute a Peptidase S1 domain. Residues Cys-56 and Cys-72 are joined by a disulfide bond. Residues His-71 and Asp-116 each act as charge relay system in the active site. Intrachain disulfides connect Cys-180–Cys-197 and Cys-206–Cys-230. Residue Ser-210 is the Charge relay system of the active site.

It belongs to the peptidase S1 family.

The protein localises to the secreted. The protein resides in the extracellular space. The enzyme catalyses Preferential cleavage: Arg-|-Xaa, Lys-|-Xaa.. In Drosophila erecta (Fruit fly), this protein is Trypsin beta (betaTry).